The following is a 343-amino-acid chain: DNA-directed RNA polymerase subunit alpha (343 aa).

The alpha N-terminal domain (alpha-NTD) stretch occupies residues 1 to 243 (MTQEIDEKIP…EQLDIFINFD (243 aa)). Positions 261–343 (ENPYLDKPVE…NAPSDAETEE (83 aa)) are alpha C-terminal domain (alpha-CTD).

This sequence belongs to the RNA polymerase alpha chain family. Homodimer. The RNAP catalytic core consists of 2 alpha, 1 beta, 1 beta' and 1 omega subunit. When a sigma factor is associated with the core the holoenzyme is formed, which can initiate transcription.

It carries out the reaction RNA(n) + a ribonucleoside 5'-triphosphate = RNA(n+1) + diphosphate. In terms of biological role, DNA-dependent RNA polymerase catalyzes the transcription of DNA into RNA using the four ribonucleoside triphosphates as substrates. This is DNA-directed RNA polymerase subunit alpha from Desulfotalea psychrophila (strain LSv54 / DSM 12343).